Reading from the N-terminus, the 630-residue chain is Chaperone protein DnaK (630 aa).

Phosphothreonine; by autocatalysis is present on Thr197. Polar residues predominate over residues 604–618; it reads KNNESVKNNESVKNN. The segment at 604-630 is disordered; it reads KNNESVKNNESVKNNESVKDVDFEEIK. Residues 619–630 show a composition bias toward basic and acidic residues; the sequence is ESVKDVDFEEIK.

Belongs to the heat shock protein 70 family.

Acts as a chaperone. In Karelsulcia muelleri (strain GWSS) (Sulcia muelleri), this protein is Chaperone protein DnaK.